The chain runs to 503 residues: Probable cytosol aminopeptidase (503 aa).

Mn(2+)-binding residues include Lys274 and Asp279. Lys286 is an active-site residue. Mn(2+) contacts are provided by Asp297, Asp356, and Glu358. The active site involves Arg360.

It belongs to the peptidase M17 family. It depends on Mn(2+) as a cofactor.

Its subcellular location is the cytoplasm. It catalyses the reaction Release of an N-terminal amino acid, Xaa-|-Yaa-, in which Xaa is preferably Leu, but may be other amino acids including Pro although not Arg or Lys, and Yaa may be Pro. Amino acid amides and methyl esters are also readily hydrolyzed, but rates on arylamides are exceedingly low.. The enzyme catalyses Release of an N-terminal amino acid, preferentially leucine, but not glutamic or aspartic acids.. In terms of biological role, presumably involved in the processing and regular turnover of intracellular proteins. Catalyzes the removal of unsubstituted N-terminal amino acids from various peptides. This is Probable cytosol aminopeptidase from Burkholderia orbicola (strain AU 1054).